A 164-amino-acid chain; its full sequence is Mineralocorticoid receptor (164 aa).

In terms of domain architecture, NR LBD spans 1 to 162 (QYSWMCLSSF…EFPRCWWRSS (162 aa)). 21-hydroxyprogesterone contacts are provided by R15 and T143. The aldosterone site is built by R15 and T143. The progesterone site is built by R15 and T143.

Belongs to the nuclear hormone receptor family. NR3 subfamily. Heteromultimeric cytoplasmic complex with HSP90, HSP70, and FKBP4, in the absence of ligand. After ligand binding, it translocates to the nucleus and binds to DNA as a homodimer and as a heterodimer with NR3C1. Binds the coactivator NCOA2. May interact with HSD11B2 in the absence of ligand. Binds the coactivators NCOA1, TIF1 and NRIP1. In terms of processing, phosphorylated.

The protein localises to the cytoplasm. The protein resides in the nucleus. Its subcellular location is the endoplasmic reticulum membrane. In terms of biological role, receptor for both mineralocorticoids (MC) such as aldosterone and glucocorticoids (GC) such as corticosterone or cortisol. Binds to mineralocorticoid response elements (MRE) and transactivates target genes. The effect of MC is to increase ion and water transport and thus raise extracellular fluid volume and blood pressure and lower potassium levels. In Sus scrofa (Pig), this protein is Mineralocorticoid receptor (NR3C2).